A 142-amino-acid chain; its full sequence is Hemoglobin subunit alpha-A (142 aa).

Positions 2–142 (VLSGSDKTNV…VGNVLTAKYR (141 aa)) constitute a Globin domain. H59 provides a ligand contact to O2. Residue H88 participates in heme b binding.

It belongs to the globin family. As to quaternary structure, heterotetramer of two alpha chains and two beta chains. Red blood cells.

Functionally, involved in oxygen transport from the lung to the various peripheral tissues. The polypeptide is Hemoglobin subunit alpha-A (HBAA) (Ara ararauna (Blue-and-yellow macaw)).